The sequence spans 710 residues: Ribonuclease R (710 aa).

Positions 246-573 (RKDLRDKVIV…VHRLLKLYLE (328 aa)) constitute an RNB domain. The S1 motif domain occupies 625 to 705 (GEVFNVVVTN…IRGEIDFVLV (81 aa)).

The protein belongs to the RNR ribonuclease family. RNase R subfamily.

The protein resides in the cytoplasm. It carries out the reaction Exonucleolytic cleavage in the 3'- to 5'-direction to yield nucleoside 5'-phosphates.. 3'-5' exoribonuclease that releases 5'-nucleoside monophosphates and is involved in maturation of structured RNAs. This chain is Ribonuclease R, found in Thermotoga maritima (strain ATCC 43589 / DSM 3109 / JCM 10099 / NBRC 100826 / MSB8).